A 92-amino-acid chain; its full sequence is Large ribosomal subunit protein bL27 (92 aa).

The tract at residues 1-22 is disordered; that stretch reads MAHTKAGGSTRNGRDSRGQRLG.

It belongs to the bacterial ribosomal protein bL27 family.

This chain is Large ribosomal subunit protein bL27, found in Mycoplasmopsis agalactiae (strain NCTC 10123 / CIP 59.7 / PG2) (Mycoplasma agalactiae).